Here is a 295-residue protein sequence, read N- to C-terminus: Adrenocorticotropic hormone receptor (295 aa).

At 1-23 (MRHILNLYENINSTARNNSDCPA) the chain is on the extracellular side. Residues N12 and N17 are each glycosylated (N-linked (GlcNAc...) asparagine). Cystine bridges form between C21-C253 and C245-C251. A helical transmembrane segment spans residues 24-49 (VILPEEIFFTVSIVGVLENLMVLLAV). The Cytoplasmic segment spans residues 50–58 (AKNKSLQSP). The chain crosses the membrane as a helical span at residues 59–79 (MYFFICSLAISDMLGSLYKIL). At 80-104 (ENVLIMFRNMGYLEPRGSFESTADD) the chain is on the extracellular side. The helical transmembrane segment at 105–126 (VVDSLFILSLLGSICSLSVIAA) threads the bilayer. Topologically, residues 127–147 (DRYITIFHALQYHSIVTMHRA) are cytoplasmic. A helical membrane pass occupies residues 148–168 (LVVLTVLWAGCTGSGITIVTF). Residues 169-180 (SHHVPTVIAFTA) lie on the Extracellular side of the membrane. Residues 181–199 (LFPLMLAFILCLYVHMFLL) traverse the membrane as a helical segment. Topologically, residues 200 to 217 (ARSHARRTSSLPKANMRG) are cytoplasmic. Residues 218 to 244 (AITLTVLLGVFIFCWAPFVLHVLLMTF) form a helical membrane-spanning segment. Residues 245-256 (CPADPYCACYMS) lie on the Extracellular side of the membrane. Residues 257–278 (LFQVNGVLIMCNAVIDPFIYAF) form a helical membrane-spanning segment. Residues 279 to 295 (RSPELRVAFKKMVICNW) are Cytoplasmic-facing. A lipid anchor (S-palmitoyl cysteine) is attached at C293.

The protein belongs to the G-protein coupled receptor 1 family. In terms of assembly, homodimer. Interacts with corticotropin (ACTH). Interacts with MRAP; this interaction targets MC2R to the plasma membrane. Interacts with MRAP2; competing with MRAP for binding to MC2R and impairing the binding of corticotropin (ACTH). Ubiquitinated by MGRN1 that may be involved in post-endocytic trafficking and/or degradation of internalized receptor.

The protein resides in the cell membrane. In terms of biological role, hormone receptor primarily expressed in adrenal cortex that plays a key role in regulating adrenocortical function. Upon corticotropin (ACTH) binding, facilitates the release of adrenal glucocorticoids, including cortisol and corticosterone. In addition, MC2R is required for fetal and neonatal adrenal gland development. Mechanistically, activates adenylate cyclase (cAMP), the MAPK cascade as well as the cAMP-dependent protein kinase A pathway leading to steroidogenic factor 1/NR5A1-mediated transcriptional activation. The sequence is that of Adrenocorticotropic hormone receptor (MC2R) from Ovis aries (Sheep).